A 173-amino-acid chain; its full sequence is Oleosin 18.5 kDa (173 aa).

Positions 1–45 are polar; that stretch reads MADTARGTHHDIIGRDQYPMMGRDRDQYQMSGRGSDYSKSRQIAK. The tract at residues 46-117 is hydrophobic; sequence AATAVTAGGS…AAITVFSWIY (72 aa). The next 3 membrane-spanning stretches (helical) occupy residues 54–74, 76–96, and 97–117; these read GSLLVLSSLTLVGTVIALTVA, PLLVIFSPILVPALITVALLI, and TGFLSSGGFGIAAITVFSWIY. Positions 151 to 173 are disordered; that stretch reads YYGQQHTGGEHDRDRTRGGQHTT. Over residues 158-167 the composition is skewed to basic and acidic residues; that stretch reads GGEHDRDRTR.

This sequence belongs to the oleosin family.

It localises to the lipid droplet. The protein resides in the membrane. May have a structural role to stabilize the lipid body during desiccation of the seed by preventing coalescence of the oil. Probably interacts with both lipid and phospholipid moieties of lipid bodies. May also provide recognition signals for specific lipase anchorage in lipolysis during seedling growth. This Arabidopsis thaliana (Mouse-ear cress) protein is Oleosin 18.5 kDa.